Consider the following 796-residue polypeptide: Armadillo repeat-containing protein wrm-1 (796 aa).

The interval 17 to 59 (NFNPMTPSTSRVSTPVRPSSTMSARQYSGSPFKAQPQNMEPSN) is disordered. One copy of the ARM repeat lies at 462–504 (ESIHCIVQLIGCSDVTIVELATGTLRNIGLHNKMNKAFMVQDG).

Interacts (independently of ARM repeat) with nhr-25. Component of the beta-catenin-lit-1 complex (also called the lit-1/wrm-1 complex or the wrm-1/lit-1 kinase complex) at least composed of lit-1 and wrm-1. Interacts (via N-terminus) with lit-1; the interaction is direct and activates lit-1 kinase activity which leads to the phosphorylation of pop-1. This promotes pop-1 interaction with par-5 and translocation of pop-1 from the nucleus to the cytoplasm.

The protein localises to the cytoplasm. The protein resides in the cell cortex. It is found in the nucleus. In terms of biological role, antagonistic role in the Wnt signaling pathway that operates in embryogenesis. When located at the cortex it has been shown to inhibit Wnt signaling during asymmetric cell division but when relocated to the nucleus it shows positive regulation. Has a role in blastomere signaling during endoderm specification. Component of the beta-catenin-lit-1 complex which promotes phosphorylation, down-regulation and subcellular relocation of pop-1. Within the complex, activates lit-1-dependent kinase activity. Can substitute for bar-1 indicating functional redundancy. Appears to have a role in centrosome positioning and can activation transcription in yeast. Involved in the development of distal tip cells (DTC) by regulating the asymmetric distribution of cye-1 and cki-1 between the daughters of Z1.a and Z4.p cells. The polypeptide is Armadillo repeat-containing protein wrm-1 (Caenorhabditis elegans).